Reading from the N-terminus, the 188-residue chain is NAD(P)H-quinone oxidoreductase subunit J (188 aa).

The protein belongs to the complex I 30 kDa subunit family. NDH-1 can be composed of about 15 different subunits; different subcomplexes with different compositions have been identified which probably have different functions.

The protein localises to the cellular thylakoid membrane. It carries out the reaction a plastoquinone + NADH + (n+1) H(+)(in) = a plastoquinol + NAD(+) + n H(+)(out). The catalysed reaction is a plastoquinone + NADPH + (n+1) H(+)(in) = a plastoquinol + NADP(+) + n H(+)(out). Functionally, NDH-1 shuttles electrons from an unknown electron donor, via FMN and iron-sulfur (Fe-S) centers, to quinones in the respiratory and/or the photosynthetic chain. The immediate electron acceptor for the enzyme in this species is believed to be plastoquinone. Couples the redox reaction to proton translocation, and thus conserves the redox energy in a proton gradient. Cyanobacterial NDH-1 also plays a role in inorganic carbon-concentration. The protein is NAD(P)H-quinone oxidoreductase subunit J of Parasynechococcus marenigrum (strain WH8102).